An 87-amino-acid chain; its full sequence is Mu-theraphotoxin-Cg1a (87 aa).

The N-terminal stretch at 1–21 (MKVLVLITLAVLGAMFVWTSA) is a signal peptide. Positions 22 to 50 (AELEERGSDQRDSPAWVKSMERIFQSEER) are excised as a propeptide. 3 disulfide bridges follow: Cys52–Cys66, Cys59–Cys71, and Cys65–Cys79.

This sequence belongs to the neurotoxin 10 (Hwtx-1) family. 39 (Jztx-34) subfamily. Expressed by the venom gland.

It is found in the secreted. Potent and selective inhibitor of hNav1.7/SCN9A (IC(50)=610 nM). Also shows a weak activity towards Nav1.3/SCN3A (IC(50)=7950 nM). In addition, inhibits voltage-gated potassium channels (Kv) in rat DRG neurons. It does not alter the voltage dependence of activation, but it causes a small hyperpolarizing shift in the steady-state inactivations of Nav1.7/SNC9A. Chimera experiments show that the toxin binds to the DIIS3-S4 linker (site 4) of Nav1.7/SCN9A, whereas Nav1.7/SCN9A Asp-827 residue is shown by substitution experiments to be critical for its sensitivity. The toxin traps the domain II voltage sensor in the closed configuration, and not in an outward position. In vivo, shows analgesic activity in three rodent pain models (formalin-induced, acid-induced, and thermal). The sequence is that of Mu-theraphotoxin-Cg1a from Chilobrachys guangxiensis (Chinese earth tiger tarantula).